The primary structure comprises 126 residues: Ribosome-binding factor A (126 aa).

It belongs to the RbfA family. As to quaternary structure, monomer. Binds 30S ribosomal subunits, but not 50S ribosomal subunits or 70S ribosomes.

The protein localises to the cytoplasm. In terms of biological role, one of several proteins that assist in the late maturation steps of the functional core of the 30S ribosomal subunit. Associates with free 30S ribosomal subunits (but not with 30S subunits that are part of 70S ribosomes or polysomes). Required for efficient processing of 16S rRNA. May interact with the 5'-terminal helix region of 16S rRNA. The sequence is that of Ribosome-binding factor A from Azoarcus sp. (strain BH72).